The primary structure comprises 115 residues: Nitrogenase-stabilizing/protective protein NifW (115 aa).

It belongs to the NifW family. In terms of assembly, homotrimer; associates with NifD.

May protect the nitrogenase Fe-Mo protein from oxidative damage. In Methylobacterium sp. (strain 4-46), this protein is Nitrogenase-stabilizing/protective protein NifW.